We begin with the raw amino-acid sequence, 205 residues long: MNPNMNMMQMSGPPMMQVSPMMQSSPQPMMPTGPPGPVPMQQQHQQQQQQQQQQQQQQQQQAEKLDNISRVKSLLGPLRESMFLTIRSSAFTLQQNNLADNLKRDTGGHGHVPRFDKHLEDFYACCDQMELHLKTAIQCMQQLTSSQHYLPGAVTAMRMENFMQDNPAGPIPYPTYLNTVRVHVQSAKDIHDTLISAAQNISQAD.

Low complexity predominate over residues 1-27; it reads MNPNMNMMQMSGPPMMQVSPMMQSSPQ. Positions 1 to 65 are disordered; it reads MNPNMNMMQM…QQQQQQAEKL (65 aa). Residues 28–38 are compositionally biased toward pro residues; that stretch reads PMMPTGPPGPV. The span at 39 to 61 shows a compositional bias: low complexity; sequence PMQQQHQQQQQQQQQQQQQQQQQ.

It belongs to the Mediator complex subunit 29 family. As to quaternary structure, component of the Mediator complex.

It is found in the nucleus. Functionally, component of the Mediator complex, a coactivator involved in the regulated transcription of nearly all RNA polymerase II-dependent genes. Mediator functions as a bridge to convey information from gene-specific regulatory proteins to the basal RNA polymerase II transcription machinery. Mediator is recruited to promoters by direct interactions with regulatory proteins and serves as a scaffold for the assembly of a functional preinitiation complex with RNA polymerase II and the general transcription factors. The polypeptide is Mediator of RNA polymerase II transcription subunit 29 (ix) (Drosophila virilis (Fruit fly)).